Here is a 398-residue protein sequence, read N- to C-terminus: NADH-ubiquinone oxidoreductase 49 kDa subunit (398 aa).

This sequence belongs to the complex I 49 kDa subunit family.

It is found in the mitochondrion. It carries out the reaction a ubiquinone + NADH + 5 H(+)(in) = a ubiquinol + NAD(+) + 4 H(+)(out). In terms of biological role, core subunit of the mitochondrial membrane respiratory chain NADH dehydrogenase (Complex I) that is believed to belong to the minimal assembly required for catalysis. Complex I functions in the transfer of electrons from NADH to the respiratory chain. The immediate electron acceptor for the enzyme is believed to be ubiquinone. Component of the iron-sulfur (IP) fragment of the enzyme. Component of the iron-sulfur (IP) fragment of the enzyme. In Pylaiella littoralis (Seaweed), this protein is NADH-ubiquinone oxidoreductase 49 kDa subunit (NAD7).